Consider the following 147-residue polypeptide: Large ribosomal subunit protein uL15 (147 aa).

Positions methionine 1–arginine 20 are enriched in basic and acidic residues. Residues methionine 1–glutamine 61 are disordered. Over residues arginine 23 to alanine 33 the composition is skewed to gly residues. Over residues glycine 34–glycine 47 the composition is skewed to basic residues.

It belongs to the universal ribosomal protein uL15 family. As to quaternary structure, part of the 50S ribosomal subunit.

Binds to the 23S rRNA. This is Large ribosomal subunit protein uL15 from Xanthomonas euvesicatoria pv. vesicatoria (strain 85-10) (Xanthomonas campestris pv. vesicatoria).